The following is a 659-amino-acid chain: Pollen receptor-like kinase 6 (659 aa).

The N-terminal stretch at 1-26 is a signal peptide; it reads MAAAVLNPGFFLLILLLSFSISPSLQ. The Extracellular segment spans residues 27–266; the sequence is YVSESEPLVR…SVPETSNKAA (240 aa). An intrachain disulfide couples Cys-58 to Cys-67. 5 LRR repeats span residues 95–118, 120–142, 143–167, 168–190, and 192–214; these read LPNL…FFKL, GLKS…FFKD, MSKL…ITQL, PQLE…EFGS, and KNLK…SIAD. Asn-128 carries an N-linked (GlcNAc...) asparagine glycan. N-linked (GlcNAc...) asparagine glycosylation is present at Asn-179. N-linked (GlcNAc...) asparagine glycosylation occurs at Asn-221. Positions 226–242 are LURE peptides binding; sequence EYLCGPVVDVGCENIEL. Cys-229 and Cys-237 are oxidised to a cystine. The segment at 241 to 260 is disordered; sequence ELNDPQEGQPPSKPSSSVPE. The helical transmembrane segment at 267–287 threads the bilayer; it reads INAIMVSISLLLLFFIIVGVI. The Cytoplasmic segment spans residues 288-659; that stretch reads KRRNKKKNPD…AVRRIEQVKT (372 aa). Positions 312 to 354 are disordered; sequence VRISESSSTTAKRSTDSSRKRGGHSDDGSTKKGVSNIGKGGNG. Positions 324–341 are enriched in basic and acidic residues; sequence RSTDSSRKRGGHSDDGST. The Protein kinase domain occupies 384–659; it reads KAAAEVLGNG…AVRRIEQVKT (276 aa). ATP contacts are provided by residues 390–398 and Lys-412; that span reads LGNGSLGSA. Ser-464 is subject to Phosphoserine. 2 positions are modified to phosphothreonine: Thr-484 and Thr-557. Ser-561 bears the Phosphoserine mark.

Belongs to the protein kinase superfamily. Ser/Thr protein kinase family. As to quaternary structure, interacts with ROPGEF8, ROPGEF9, ROPGEF12, ROPGEF13, PRK3, LIP1 and LIP2. Binds to LURE peptides via its LRR repeats; interacts with LURE1.1, LURE1.2, LURE1.3 and LURE1.4. As to expression, expressed specifically in the pollen tube, predominantly at the tip.

It is found in the cell membrane. It localises to the cytoplasmic granule. In terms of biological role, key receptor for sensing species-specific attractants in cooperation with other pollen receptor-like kinases. Essential for pollen tube reorientation toward attractant peptides. The polypeptide is Pollen receptor-like kinase 6 (Arabidopsis thaliana (Mouse-ear cress)).